A 532-amino-acid polypeptide reads, in one-letter code: Phosphoenolpyruvate carboxykinase (ATP) (532 aa).

The substrate site is built by arginine 60, tyrosine 194, and lysine 200. ATP contacts are provided by residues lysine 200, histidine 219, and 237–245 (GLSGTGKTT). Mn(2+)-binding residues include lysine 200 and histidine 219. Aspartate 258 is a Mn(2+) binding site. The ATP site is built by glutamate 286, arginine 324, and threonine 449. Arginine 324 contributes to the substrate binding site.

Belongs to the phosphoenolpyruvate carboxykinase (ATP) family. Mn(2+) is required as a cofactor.

The protein localises to the cytoplasm. The catalysed reaction is oxaloacetate + ATP = phosphoenolpyruvate + ADP + CO2. It functions in the pathway carbohydrate biosynthesis; gluconeogenesis. Functionally, involved in the gluconeogenesis. Catalyzes the conversion of oxaloacetate (OAA) to phosphoenolpyruvate (PEP) through direct phosphoryl transfer between the nucleoside triphosphate and OAA. The sequence is that of Phosphoenolpyruvate carboxykinase (ATP) from Roseobacter denitrificans (strain ATCC 33942 / OCh 114) (Erythrobacter sp. (strain OCh 114)).